The primary structure comprises 547 residues: Chaperonin GroEL (547 aa).

ATP-binding positions include 30-33 (TLGP), Lys-51, 87-91 (DGTTT), Gly-415, and Asp-496.

This sequence belongs to the chaperonin (HSP60) family. Forms a cylinder of 14 subunits composed of two heptameric rings stacked back-to-back. Interacts with the co-chaperonin GroES.

The protein localises to the cytoplasm. The enzyme catalyses ATP + H2O + a folded polypeptide = ADP + phosphate + an unfolded polypeptide.. Together with its co-chaperonin GroES, plays an essential role in assisting protein folding. The GroEL-GroES system forms a nano-cage that allows encapsulation of the non-native substrate proteins and provides a physical environment optimized to promote and accelerate protein folding. The polypeptide is Chaperonin GroEL (Histophilus somni (strain 129Pt) (Haemophilus somnus)).